The chain runs to 504 residues: Anaerobic nitric oxide reductase transcription regulator NorR (504 aa).

D57 bears the 4-aspartylphosphate mark. In terms of domain architecture, Sigma-54 factor interaction spans M187–V416. ATP is bound by residues G215 to E222 and A278 to E287. A DNA-binding region (H-T-H motif) is located at residues W479–K498.

It functions in the pathway nitrogen metabolism; nitric oxide reduction. Its function is as follows. Required for the expression of anaerobic nitric oxide (NO) reductase, acts as a transcriptional activator for at least the norVW operon. Activation also requires sigma-54. This is Anaerobic nitric oxide reductase transcription regulator NorR from Escherichia coli (strain SMS-3-5 / SECEC).